A 272-amino-acid chain; its full sequence is Heat stress transcription factor A-7a (272 aa).

Residues 1–26 form a disordered region; it reads MMNPFLPEGCDPPPPPQPMEGLHENA. The DNA-binding element occupies 27–121; that stretch reads PPPFLTKTFE…LLKNIKRRNP (95 aa). A hydrophobic repeat HR-A/B region spans residues 132-186; that stretch reads ACNELRREKQVLMMEIVSLRQQQQTTKSYIKAMEQRIEGTERKQRQMMSFLARAM. The Bipartite nuclear localization signal signature appears at 201–216; that stretch reads KKIKELEDNESAKRKR. The span at 203-212 shows a compositional bias: basic and acidic residues; it reads IKELEDNESA. The interval 203–223 is disordered; sequence IKELEDNESAKRKRGSSSMSE. The short motif at 256 to 265 is the AHA element; that stretch reads DGFWEELLSD.

This sequence belongs to the HSF family. Class A subfamily. As to quaternary structure, homotrimer. In terms of processing, exhibits temperature-dependent phosphorylation.

It localises to the nucleus. Functionally, transcriptional activator that specifically binds DNA sequence 5'-AGAAnnTTCT-3' known as heat shock promoter elements (HSE). This is Heat stress transcription factor A-7a (HSFA7A) from Arabidopsis thaliana (Mouse-ear cress).